A 449-amino-acid polypeptide reads, in one-letter code: Naphthalene 1,2-dioxygenase system, large oxygenase component (449 aa).

The region spanning tryptophan 39–glutamate 137 is the Rieske domain. [2Fe-2S] cluster contacts are provided by cysteine 81, histidine 83, cysteine 101, and histidine 104. Fe cation-binding residues include histidine 208, histidine 213, and aspartate 362.

The protein belongs to the bacterial ring-hydroxylating dioxygenase alpha subunit family. As to quaternary structure, the naphthalene dioxygenase (NDO) multicomponent enzyme system is composed of an electron transfer component and a dioxygenase component (iron sulfur protein (ISP)). The electron transfer component is composed of a ferredoxin reductase (NdoR) and a ferredoxin (NdoA), and the dioxygenase component is formed of a heterohexamer (trimer of heterodimers) of three large alpha subunits (NdoB) and three small beta subunits (NdoC). It depends on [2Fe-2S] cluster as a cofactor. Fe(2+) is required as a cofactor.

The enzyme catalyses naphthalene + NADH + O2 + H(+) = (1R,2S)-1,2-dihydronaphthalene-1,2-diol + NAD(+). It functions in the pathway aromatic compound metabolism; naphthalene degradation. In terms of biological role, component of the naphthalene dioxygenase (NDO) multicomponent enzyme system which catalyzes the incorporation of both atoms of molecular oxygen into naphthalene to form cis-(1R,2S)-dihydroxy-1,2-dihydronaphthalene. The alpha subunit has a catalytic role in the holoenzyme. This is Naphthalene 1,2-dioxygenase system, large oxygenase component from Pseudomonas fluorescens.